We begin with the raw amino-acid sequence, 214 residues long: ER lumen protein-retaining receptor (214 aa).

At methionine 1–asparagine 4 the chain is on the lumenal side. A helical transmembrane segment spans residues leucine 5–threonine 23. Over lysine 24 to arginine 37 the chain is Cytoplasmic. A helical membrane pass occupies residues serine 38–tyrosine 55. Over asparagine 56–threonine 63 the chain is Lumenal. A helical transmembrane segment spans residues isoleucine 64–lysine 82. Topologically, residues arginine 83–tryptophan 98 are cytoplasmic. Residues tyrosine 99 to threonine 112 form a helical membrane-spanning segment. Over glutamate 113–glutamate 119 the chain is Lumenal. The chain crosses the membrane as a helical span at residues isoleucine 120 to leucine 139. At leucine 140–serine 151 the chain is on the cytoplasmic side. A helical membrane pass occupies residues glutamine 152–tyrosine 170. Residues arginine 171 to proline 181 lie on the Lumenal side of the membrane. A helical transmembrane segment spans residues leucine 182–isoleucine 202. Residues lysine 203–proline 214 are Cytoplasmic-facing.

It belongs to the ERD2 family.

The protein localises to the endoplasmic reticulum membrane. In terms of biological role, required for the retention of luminal endoplasmic reticulum proteins. Determines the specificity of the luminal ER protein retention system. Also required for normal vesicular traffic through the Golgi. This chain is ER lumen protein-retaining receptor, found in Entamoeba histolytica (strain ATCC 30459 / HM-1:IMSS / ABRM).